Reading from the N-terminus, the 376-residue chain is Alcohol dehydrogenase 1 (376 aa).

Position 2 is an N-acetylserine (S2). Residues C47, H68, C98, C101, C104, C112, and C176 each coordinate Zn(2+). NAD(+) contacts are provided by residues 201-206, D225, and K230; that span reads GLGGVG. The residue at position 235 (K235) is an N6-succinyllysine. 294–296 serves as a coordination point for NAD(+); sequence VGV. K341 carries the post-translational modification N6-succinyllysine. R371 contacts NAD(+).

This sequence belongs to the zinc-containing alcohol dehydrogenase family. Class-I subfamily. In terms of assembly, dimer of identical or non-identical chains of three types (A, B, C), which are coded by 3 separate genes at different loci. It depends on Zn(2+) as a cofactor.

The protein resides in the cytoplasm. It catalyses the reaction a primary alcohol + NAD(+) = an aldehyde + NADH + H(+). It carries out the reaction a secondary alcohol + NAD(+) = a ketone + NADH + H(+). The protein is Alcohol dehydrogenase 1 (Adh1) of Rattus norvegicus (Rat).